The sequence spans 677 residues: Methionine--tRNA ligase (677 aa).

The 'HIGH' region motif lies at 15–25 (PYANGSIHLGH). Residues Cys-146, Cys-149, Cys-159, and Cys-162 each coordinate Zn(2+). The 'KMSKS' region motif lies at 333-337 (KMSKS). Position 336 (Lys-336) interacts with ATP. The tRNA-binding domain occupies 575-677 (DFAKVDLRVA…DGAKPGQQVK (103 aa)).

This sequence belongs to the class-I aminoacyl-tRNA synthetase family. MetG type 1 subfamily. As to quaternary structure, homodimer. The cofactor is Zn(2+).

The protein resides in the cytoplasm. The enzyme catalyses tRNA(Met) + L-methionine + ATP = L-methionyl-tRNA(Met) + AMP + diphosphate. In terms of biological role, is required not only for elongation of protein synthesis but also for the initiation of all mRNA translation through initiator tRNA(fMet) aminoacylation. In Citrobacter koseri (strain ATCC BAA-895 / CDC 4225-83 / SGSC4696), this protein is Methionine--tRNA ligase.